The chain runs to 239 residues: Geranylgeranylglyceryl phosphate synthase (239 aa).

Mg(2+) is bound by residues aspartate 18 and serine 45. Sn-glycerol 1-phosphate-binding positions include 166 to 172 (YLEAGSG), 197 to 198 (GG), and 219 to 220 (GT).

This sequence belongs to the GGGP/HepGP synthase family. Group II subfamily. The cofactor is Mg(2+).

It localises to the cytoplasm. It carries out the reaction sn-glycerol 1-phosphate + (2E,6E,10E)-geranylgeranyl diphosphate = sn-3-O-(geranylgeranyl)glycerol 1-phosphate + diphosphate. Its pathway is membrane lipid metabolism; glycerophospholipid metabolism. Prenyltransferase that catalyzes the transfer of the geranylgeranyl moiety of geranylgeranyl diphosphate (GGPP) to the C3 hydroxyl of sn-glycerol-1-phosphate (G1P). This reaction is the first ether-bond-formation step in the biosynthesis of archaeal membrane lipids. This chain is Geranylgeranylglyceryl phosphate synthase, found in Pyrobaculum arsenaticum (strain DSM 13514 / JCM 11321 / PZ6).